The sequence spans 427 residues: F-box protein At2g16450 (427 aa).

In terms of domain architecture, F-box spans 1–45 (MNPSPITIDLILEILSRLPAKSVRRFHCVSKRWASIFGSPYFKEL).

The chain is F-box protein At2g16450 from Arabidopsis thaliana (Mouse-ear cress).